A 457-amino-acid chain; its full sequence is MADQKQRVTVIGGGLAGTECAYQLSRRGVPVVLREMKPQKRSPAHKSDTLAELVCSNSLRSDNPESAIGLLHAELRALGSLVLSAADANRVPAGDALAVERERFSAAITESLLRQPGVELVAGEVEQLPEDGPVVIATGPLTSDALTRELERHVGTRLYFYDSIAPILSADSIDMNVAFRQSRYGKGGGDDYLNLPMTKDEYYRFIAEVKAGQKVVPHAFEEPKYFEGCLPIEVMAERGDDTLAYGPMKPVGLRDPRTGQEPYAVVQLRMEDVGGTSWNMVGFQTRLTWGEQKRIFSSFIPGLQQAEFLRMGQIHRNTFIDSPRLLAKDLSLKTEPRLYFAGQISGVEGYVESAACGYLVALALHARLTGTEFVPPPATTAMGALLRHVTGEAHPPDYPHQPSNISFGIFSPLTGRMKKAEKRAAYSARAKQDLAAWLPHAGVPAAGAPEHVDQRSA.

FAD is bound at residue 12–17 (GGGLAG).

This sequence belongs to the MnmG family. TrmFO subfamily. FAD serves as cofactor.

The protein resides in the cytoplasm. It catalyses the reaction uridine(54) in tRNA + (6R)-5,10-methylene-5,6,7,8-tetrahydrofolate + NADH + H(+) = 5-methyluridine(54) in tRNA + (6S)-5,6,7,8-tetrahydrofolate + NAD(+). The catalysed reaction is uridine(54) in tRNA + (6R)-5,10-methylene-5,6,7,8-tetrahydrofolate + NADPH + H(+) = 5-methyluridine(54) in tRNA + (6S)-5,6,7,8-tetrahydrofolate + NADP(+). Catalyzes the folate-dependent formation of 5-methyl-uridine at position 54 (M-5-U54) in all tRNAs. This Myxococcus xanthus (strain DK1622) protein is Methylenetetrahydrofolate--tRNA-(uracil-5-)-methyltransferase TrmFO.